The sequence spans 318 residues: Ribosome biogenesis protein RLP7 (318 aa).

2 disordered regions span residues 1 to 49 and 101 to 121; these read MSQP…NRFV and AGSK…DEED. Over residues 19–40 the composition is skewed to basic and acidic residues; the sequence is ADRTRLEKQELAKKRKEQEEKQ. Positions 110-121 are enriched in acidic residues; it reads ELQDVDEEDEED.

Belongs to the universal ribosomal protein uL30 family.

It localises to the nucleus. Its subcellular location is the nucleolus. Involved in the biogenesis of the 60S ribosomal subunit. May act as a specificity factor that binds precursor rRNAs and tethers the enzymes that carry out the early 5' to 3' exonucleolytic reactions that generate the mature rRNAs. This Kluyveromyces lactis (strain ATCC 8585 / CBS 2359 / DSM 70799 / NBRC 1267 / NRRL Y-1140 / WM37) (Yeast) protein is Ribosome biogenesis protein RLP7 (RLP7).